The sequence spans 453 residues: Bifunctional protein GlmU (453 aa).

Positions 1–226 (MKFSAVILAA…PIEVEGVNDR (226 aa)) are pyrophosphorylase. UDP-N-acetyl-alpha-D-glucosamine contacts are provided by residues 8–11 (LAAG), K22, Q73, 78–79 (GT), 100–102 (YGD), G137, E151, N166, and N224. D102 contacts Mg(2+). N224 lines the Mg(2+) pocket. The tract at residues 227–247 (AQLARLERAFQAAQAKKLLEQ) is linker. The segment at 248-453 (GVMLRDPARF…TGWQRPVKKK (206 aa)) is N-acetyltransferase. UDP-N-acetyl-alpha-D-glucosamine-binding residues include R330 and K348. H360 functions as the Proton acceptor in the catalytic mechanism. Positions 363 and 374 each coordinate UDP-N-acetyl-alpha-D-glucosamine. Acetyl-CoA contacts are provided by residues A377, 383 to 384 (NY), S402, A420, and R437.

The protein in the N-terminal section; belongs to the N-acetylglucosamine-1-phosphate uridyltransferase family. In the C-terminal section; belongs to the transferase hexapeptide repeat family. Homotrimer. The cofactor is Mg(2+).

Its subcellular location is the cytoplasm. It catalyses the reaction alpha-D-glucosamine 1-phosphate + acetyl-CoA = N-acetyl-alpha-D-glucosamine 1-phosphate + CoA + H(+). The enzyme catalyses N-acetyl-alpha-D-glucosamine 1-phosphate + UTP + H(+) = UDP-N-acetyl-alpha-D-glucosamine + diphosphate. It participates in nucleotide-sugar biosynthesis; UDP-N-acetyl-alpha-D-glucosamine biosynthesis; N-acetyl-alpha-D-glucosamine 1-phosphate from alpha-D-glucosamine 6-phosphate (route II): step 2/2. The protein operates within nucleotide-sugar biosynthesis; UDP-N-acetyl-alpha-D-glucosamine biosynthesis; UDP-N-acetyl-alpha-D-glucosamine from N-acetyl-alpha-D-glucosamine 1-phosphate: step 1/1. It functions in the pathway bacterial outer membrane biogenesis; LPS lipid A biosynthesis. Functionally, catalyzes the last two sequential reactions in the de novo biosynthetic pathway for UDP-N-acetylglucosamine (UDP-GlcNAc). The C-terminal domain catalyzes the transfer of acetyl group from acetyl coenzyme A to glucosamine-1-phosphate (GlcN-1-P) to produce N-acetylglucosamine-1-phosphate (GlcNAc-1-P), which is converted into UDP-GlcNAc by the transfer of uridine 5-monophosphate (from uridine 5-triphosphate), a reaction catalyzed by the N-terminal domain. This chain is Bifunctional protein GlmU, found in Vibrio vulnificus (strain CMCP6).